The primary structure comprises 101 residues: Multivesicular body sorting factor 12 (101 aa).

At methionine 1 the chain carries N-acetylmethionine. A Phosphoserine modification is found at serine 94.

Component of the ESCRT-I complex (endosomal sorting complex required for transport I) which consists of STP22, VPS28, SRN2 and MVB12 in a 1:1:1:1 stoichiometry. Interacts with STP22 and SRN2.

The protein localises to the cytoplasm. It localises to the endosome. Its subcellular location is the late endosome membrane. Component of the ESCRT-I complex, a regulator of vesicular trafficking process. Binds to ubiquitinated cargo proteins and is required for the sorting of endocytic ubiquitinated cargos into multivesicular bodies (MVBs). Appears to be involved in cargo sorting and release of the ESCRT-I complex from the MVBs. The chain is Multivesicular body sorting factor 12 (MVB12) from Saccharomyces cerevisiae (strain ATCC 204508 / S288c) (Baker's yeast).